We begin with the raw amino-acid sequence, 143 residues long: Transcription antitermination protein NusB (143 aa).

This sequence belongs to the NusB family.

Functionally, involved in transcription antitermination. Required for transcription of ribosomal RNA (rRNA) genes. Binds specifically to the boxA antiterminator sequence of the ribosomal RNA (rrn) operons. This is Transcription antitermination protein NusB from Desulfatibacillum aliphaticivorans.